We begin with the raw amino-acid sequence, 233 residues long: 7-cyano-7-deazaguanine synthase (233 aa).

Residue 17-27 (LSGGLDSMVCA) coordinates ATP. Cys-196, Cys-206, Cys-209, and Cys-212 together coordinate Zn(2+).

Belongs to the QueC family. The cofactor is Zn(2+).

It catalyses the reaction 7-carboxy-7-deazaguanine + NH4(+) + ATP = 7-cyano-7-deazaguanine + ADP + phosphate + H2O + H(+). Its pathway is purine metabolism; 7-cyano-7-deazaguanine biosynthesis. Its function is as follows. Catalyzes the ATP-dependent conversion of 7-carboxy-7-deazaguanine (CDG) to 7-cyano-7-deazaguanine (preQ(0)). The polypeptide is 7-cyano-7-deazaguanine synthase (Novosphingobium aromaticivorans (strain ATCC 700278 / DSM 12444 / CCUG 56034 / CIP 105152 / NBRC 16084 / F199)).